We begin with the raw amino-acid sequence, 332 residues long: Fructose-1,6-bisphosphatase class 1 (332 aa).

Residues glutamate 89, aspartate 110, leucine 112, and aspartate 113 each coordinate Mg(2+). Substrate-binding positions include 113-116, asparagine 206, tyrosine 239, 257-259, and lysine 269; these read DGSS and YLY. Position 275 (glutamate 275) interacts with Mg(2+).

Belongs to the FBPase class 1 family. Homotetramer. The cofactor is Mg(2+).

It localises to the cytoplasm. It carries out the reaction beta-D-fructose 1,6-bisphosphate + H2O = beta-D-fructose 6-phosphate + phosphate. The protein operates within carbohydrate biosynthesis; gluconeogenesis. The chain is Fructose-1,6-bisphosphatase class 1 from Salmonella arizonae (strain ATCC BAA-731 / CDC346-86 / RSK2980).